The chain runs to 387 residues: Beta-citrylglutamate synthase B (387 aa).

The ATP-grasp domain occupies 119–304; that stretch reads FQELAGHGVP…VAGIIADYAA (186 aa). ATP is bound by residues Lys158, 193–203, and Arg219; that span reads QKYIKESHGRD. The Mg(2+) site is built by Asp264, Glu277, and Asn279. Mn(2+) contacts are provided by Asp264, Glu277, and Asn279. The tract at residues 325–361 is disordered; the sequence is ASETSEPELGPPASAAVDNMSASSSSVDSDPESTTER. Positions 337-352 are enriched in low complexity; that stretch reads ASAAVDNMSASSSSVD.

This sequence belongs to the RimK family. The cofactor is Mg(2+). Requires Mn(2+) as cofactor. Strongly expressed in brain and testis. Expressed in eyes, thymus, lung, kidney, skeletal muscle, spleen, skin and heart. Expressed in neurons of the neocortex, the gray matter and Purkinje cells.

The protein localises to the cytoplasm. The catalysed reaction is citrate + L-glutamate + ATP = beta-citrylglutamate + ADP + phosphate + H(+). It carries out the reaction N-acetyl-L-aspartate + L-glutamate + ATP = N-acetyl-L-aspartyl-L-glutamate + ADP + phosphate + H(+). Catalyzes the synthesis of beta-citryl-L-glutamate and N-acetyl-L-aspartyl-L-glutamate. Beta-citryl-L-glutamate is synthesized more efficiently than N-acetyl-L-aspartyl-L-glutamate. The protein is Beta-citrylglutamate synthase B (Rimklb) of Mus musculus (Mouse).